We begin with the raw amino-acid sequence, 450 residues long: Glucose-6-phosphate isomerase (450 aa).

The residue at position 38 (T38) is a Phosphothreonine. The active-site Proton donor is the E290. Active-site residues include H311 and K425.

This sequence belongs to the GPI family.

It is found in the cytoplasm. The catalysed reaction is alpha-D-glucose 6-phosphate = beta-D-fructose 6-phosphate. It participates in carbohydrate biosynthesis; gluconeogenesis. Its pathway is carbohydrate degradation; glycolysis; D-glyceraldehyde 3-phosphate and glycerone phosphate from D-glucose: step 2/4. Functionally, catalyzes the reversible isomerization of glucose-6-phosphate to fructose-6-phosphate. In Bacillus licheniformis (strain ATCC 14580 / DSM 13 / JCM 2505 / CCUG 7422 / NBRC 12200 / NCIMB 9375 / NCTC 10341 / NRRL NRS-1264 / Gibson 46), this protein is Glucose-6-phosphate isomerase.